We begin with the raw amino-acid sequence, 166 residues long: Large ribosomal subunit protein uL10 (166 aa).

Belongs to the universal ribosomal protein uL10 family. In terms of assembly, part of the ribosomal stalk of the 50S ribosomal subunit. The N-terminus interacts with L11 and the large rRNA to form the base of the stalk. The C-terminus forms an elongated spine to which L12 dimers bind in a sequential fashion forming a multimeric L10(L12)X complex.

Forms part of the ribosomal stalk, playing a central role in the interaction of the ribosome with GTP-bound translation factors. This Lysinibacillus sphaericus (strain C3-41) protein is Large ribosomal subunit protein uL10.